We begin with the raw amino-acid sequence, 380 residues long: Protein arginine N-methyltransferase PRMT10 (380 aa).

The region spanning 26-357 is the SAM-dependent MTase PRMT-type domain; it reads EVDFANYFCT…KENHRLMDME (332 aa). Q42, R51, G75, E97, and E126 together coordinate S-adenosyl-L-methionine. Catalysis depends on residues E140 and E149. The segment at 187-227 is dimerization arm; it reads ENKMEDLEIAMHDWNLFVEDTESYYGVNMNVLTKAYRAEHE.

The protein belongs to the class I-like SAM-binding methyltransferase superfamily. Protein arginine N-methyltransferase family. Ring-like homodimer.

The catalysed reaction is L-arginyl-[protein] + 2 S-adenosyl-L-methionine = N(omega),N(omega)-dimethyl-L-arginyl-[protein] + 2 S-adenosyl-L-homocysteine + 2 H(+). Functionally, methylates (mono and asymmetric dimethylation) the guanidino nitrogens of arginyl residues in some proteins. This Oryza sativa subsp. japonica (Rice) protein is Protein arginine N-methyltransferase PRMT10 (PRMT10).